A 327-amino-acid chain; its full sequence is Malate dehydrogenase (327 aa).

Position 11–17 (11–17 (GAAGQIS)) interacts with NAD(+). Residues R92 and R98 each contribute to the substrate site. NAD(+)-binding positions include N105, Q112, and 129–131 (VGN). 2 residues coordinate substrate: N131 and R162. H187 (proton acceptor) is an active-site residue.

The protein belongs to the LDH/MDH superfamily. MDH type 2 family.

It catalyses the reaction (S)-malate + NAD(+) = oxaloacetate + NADH + H(+). In terms of biological role, catalyzes the reversible oxidation of malate to oxaloacetate. This chain is Malate dehydrogenase, found in Nitrosomonas europaea (strain ATCC 19718 / CIP 103999 / KCTC 2705 / NBRC 14298).